We begin with the raw amino-acid sequence, 223 residues long: Ribonuclease 3 (223 aa).

One can recognise an RNase III domain in the interval 3–125; sequence LERLQKKLGY…IIAAVYLDAG (123 aa). E38 provides a ligand contact to Mg(2+). The active site involves D42. Mg(2+) is bound by residues D111 and E114. Residue E114 is part of the active site. The region spanning 152–222 is the DRBM domain; it reads DPKTRLQEYL…ALQVIKVLGI (71 aa).

This sequence belongs to the ribonuclease III family. As to quaternary structure, homodimer. Mg(2+) serves as cofactor.

It is found in the cytoplasm. The enzyme catalyses Endonucleolytic cleavage to 5'-phosphomonoester.. Digests double-stranded RNA. Involved in the processing of primary rRNA transcript to yield the immediate precursors to the large and small rRNAs (23S and 16S). Processes some mRNAs, and tRNAs when they are encoded in the rRNA operon. Processes pre-crRNA and tracrRNA of type II CRISPR loci if present in the organism. This Glaesserella parasuis serovar 5 (strain SH0165) (Haemophilus parasuis) protein is Ribonuclease 3.